Consider the following 332-residue polypeptide: uncharacterized protein (332 aa).

Belongs to the bacterial solute-binding protein 1 family. WtpA subfamily.

This is an uncharacterized protein from Methanococcus maripaludis (strain DSM 14266 / JCM 13030 / NBRC 101832 / S2 / LL).